Here is a 349-residue protein sequence, read N- to C-terminus: 3-isopropylmalate dehydrogenase (349 aa).

4 residues coordinate substrate: R91, R101, R129, and D219. Mg(2+)-binding residues include D219, D243, and D247. 277–289 (GSAPDIAGLGKAN) serves as a coordination point for NAD(+).

This sequence belongs to the isocitrate and isopropylmalate dehydrogenases family. LeuB type 1 subfamily. As to quaternary structure, homodimer. Mg(2+) is required as a cofactor. Mn(2+) serves as cofactor.

It is found in the cytoplasm. It carries out the reaction (2R,3S)-3-isopropylmalate + NAD(+) = 4-methyl-2-oxopentanoate + CO2 + NADH. It participates in amino-acid biosynthesis; L-leucine biosynthesis; L-leucine from 3-methyl-2-oxobutanoate: step 3/4. Functionally, catalyzes the oxidation of 3-carboxy-2-hydroxy-4-methylpentanoate (3-isopropylmalate) to 3-carboxy-4-methyl-2-oxopentanoate. The product decarboxylates to 4-methyl-2 oxopentanoate. This is 3-isopropylmalate dehydrogenase from Zymomonas mobilis subsp. mobilis (strain ATCC 31821 / ZM4 / CP4).